Here is a 102-residue protein sequence, read N- to C-terminus: RNA-binding protein Hfq (102 aa).

The Sm domain maps to 9–68 (DPFLNALRRERVPVSIYLVNGIKLQGQIESFDQFVILLKNTVSQMVYKHAISTVVPSRPV). Residues 65-102 (SRPVSHHSSNTSVGASVGNYHSGGVSAPAAQQESDGTE) form a disordered region. Residues 93 to 102 (AAQQESDGTE) are compositionally biased toward polar residues.

Belongs to the Hfq family. As to quaternary structure, homohexamer.

In terms of biological role, RNA chaperone that binds small regulatory RNA (sRNAs) and mRNAs to facilitate mRNA translational regulation in response to envelope stress, environmental stress and changes in metabolite concentrations. Also binds with high specificity to tRNAs. In Photorhabdus laumondii subsp. laumondii (strain DSM 15139 / CIP 105565 / TT01) (Photorhabdus luminescens subsp. laumondii), this protein is RNA-binding protein Hfq.